Reading from the N-terminus, the 355-residue chain is MNIVSWKDANDEVAGGATTRREREVKEDQEETEVRATSGKTVIKKQPTSISSSSSSWMKSKDPRIVRVSRAFGGKDRHSKVCTLRGLRDRRVRLSVPTAIQLYDLQERLGVDQPSKAVDWLLDAAKEEIDELPPLPISPENFSIFNHHQSFLNLGQRPGQDPTQLGFKINGCVQKSTTTSREENDREKGENDVVYTNNHHVGSYGTYHNLEHHHHHHQHLSLQADYHSHQLHSLVPFPSQILVCPMTTSPTTTTIQSLFPSSSSAGSGTMETLDPRQMVSHFQMPLMGNSSSSSSQNISTLYSLLHGSSSNNGGRDIDNRMSSVQFNRTNSTTTANMSRHLGSERCTSRGSDHHM.

The tract at residues M1–W57 is disordered. Residues G74–L132 enclose the TCP domain. Residues T329 to M355 are disordered. Residues L341 to M355 show a composition bias toward basic and acidic residues.

Interacts with AHL27 and AHL29. Interacts with SPL. Interacts with KIN10; KIN11 and FLZ3. In terms of tissue distribution, expressed in cotyledons, particularly in the vascular region, in leaves, buds, flowers and immature siliques, and, to a lower extent, in roots.

Its subcellular location is the nucleus. The protein resides in the plastid. It is found in the chloroplast. Plays a pivotal role in the control of morphogenesis of shoot organs by negatively regulating the expression of boundary-specific genes such as CUC genes, probably through the induction of miRNA (e.g. miR164). Binds to the 3'-ACC-5' repeats in the light-responsive promoter (LRP) of psbD, and activates its transcription. Participates in ovule development. The sequence is that of Transcription factor TCP13 (TCP13) from Arabidopsis thaliana (Mouse-ear cress).